The sequence spans 257 residues: Snake venom serine protease KN3 (257 aa).

Positions 1–18 (MVLIRVLANLLILQLSYA) are cleaved as a signal peptide. A propeptide spanning residues 19–24 (QKSSKL) is cleaved from the precursor. Positions 25–248 (VVGGDECNIN…HLDWIKSIIA (224 aa)) constitute a Peptidase S1 domain. 6 disulfide bridges follow: Cys-31/Cys-162, Cys-49/Cys-65, Cys-97/Cys-255, Cys-141/Cys-209, Cys-173/Cys-188, and Cys-199/Cys-224. Residues His-64 and Asp-109 each act as charge relay system in the active site. Asn-120, Asn-121, and Asn-164 each carry an N-linked (GlcNAc...) asparagine glycan. Ser-203 functions as the Charge relay system in the catalytic mechanism.

The protein belongs to the peptidase S1 family. Snake venom subfamily. Monomer. As to expression, expressed by the venom gland.

The protein localises to the secreted. Functionally, snake venom serine protease that may act in the hemostasis system of the prey. This chain is Snake venom serine protease KN3, found in Trimeresurus stejnegeri (Chinese green tree viper).